The chain runs to 322 residues: Adenine deaminase (322 aa).

Zn(2+)-binding residues include His-11, His-13, and His-189. The active-site Proton donor is the Glu-192. A Zn(2+)-binding site is contributed by Asp-270. Substrate is bound at residue Asp-271.

Belongs to the metallo-dependent hydrolases superfamily. Adenosine and AMP deaminases family. Adenine deaminase type 2 subfamily. Zn(2+) is required as a cofactor.

It catalyses the reaction adenine + H2O + H(+) = hypoxanthine + NH4(+). Catalyzes the hydrolytic deamination of adenine to hypoxanthine. Plays an important role in the purine salvage pathway and in nitrogen catabolism. In Rhizobium johnstonii (strain DSM 114642 / LMG 32736 / 3841) (Rhizobium leguminosarum bv. viciae), this protein is Adenine deaminase.